Here is a 147-residue protein sequence, read N- to C-terminus: DNA-directed RNA polymerase subunit 6 homolog (147 aa).

The segment at 20-39 (ETEEENFVDSEEESEDKDEI) is disordered.

This sequence belongs to the archaeal RpoK/eukaryotic RPB6 RNA polymerase subunit family. As to quaternary structure, part of the viral DNA-directed RNA polymerase that consists of 8 polII-like subunits (RPB1, RPB2, RPB3, RPB5, RPB6, RPB7, RPB9, RPB10), a capping enzyme and a termination factor.

The protein localises to the host cytoplasm. It is found in the virion. Its function is as follows. Component of the DNA-directed RNA polymerase (RNAP) that catalyzes the transcription in the cytoplasm of viral DNA into RNA using the four ribonucleoside triphosphates as substrates. This Ornithodoros (relapsing fever ticks) protein is DNA-directed RNA polymerase subunit 6 homolog.